The following is a 274-amino-acid chain: Outer surface protein A (274 aa).

The first 16 residues, 1–16, serve as a signal peptide directing secretion; that stretch reads MKKYLLGIGLILALIA. A lipid anchor (N-palmitoyl cysteine) is attached at C17. Residue C17 is the site of S-diacylglycerol cysteine attachment.

The protein belongs to the OspA lipoprotein family.

Its subcellular location is the cell outer membrane. The protein localises to the cell surface. The polypeptide is Outer surface protein A (Borreliella burgdorferi (Lyme disease spirochete)).